Consider the following 462-residue polypeptide: MTQKIRTRFAPSPTGFIHLGNIRSALYPWAFARATGGDFILRIEDTDVERSSQAAVDVIIEGMRWLGLDHDEGPFYQMQRMDRYKAVLAEMQAAGQVYPCYMSVAELDALREKQMAAKEKPRYDGTWRPEPGKTLPPIPAGVQPVLRFKNPQGGSVVWDDKVKGRIEISNDELDDLVIARPDGTPTYNFCVVVDDIDMAITHVIRGDDHVNNTPRQINIFRALGKDVPVYAHLPTVLNEQGEKMSKRNGAKPVTQYAAEGYLPDAMVNYLARLGWSHGDDEIFSREQFLKWFNLDHLGKSAAQFDEAKLRWVNAQHLKATADDKLAELVQPFLAARGVGLDTARMVGGCGLFKDRCSTLVELADWLQLLVTGGQPSAQDISTHVTEAVRPALGKLADALVACEWSKAAIAAAIKQVLAETGLKMPQLAMAVRVLVMGTPQTPSLDAILELMKREDVISRLKI.

The 'HIGH' region signature appears at 11–21; the sequence is PSPTGFIHLGN. Over residues 120–131 the composition is skewed to basic and acidic residues; that stretch reads KPRYDGTWRPEP. The tract at residues 120-140 is disordered; it reads KPRYDGTWRPEPGKTLPPIPA. A 'KMSKS' region motif is present at residues 243–247; it reads KMSKR. An ATP-binding site is contributed by lysine 246.

Belongs to the class-I aminoacyl-tRNA synthetase family. Glutamate--tRNA ligase type 1 subfamily. As to quaternary structure, monomer.

The protein resides in the cytoplasm. The enzyme catalyses tRNA(Glu) + L-glutamate + ATP = L-glutamyl-tRNA(Glu) + AMP + diphosphate. In terms of biological role, catalyzes the attachment of glutamate to tRNA(Glu) in a two-step reaction: glutamate is first activated by ATP to form Glu-AMP and then transferred to the acceptor end of tRNA(Glu). The chain is Glutamate--tRNA ligase from Polaromonas sp. (strain JS666 / ATCC BAA-500).